We begin with the raw amino-acid sequence, 276 residues long: Polyamine aminopropyltransferase (276 aa).

One can recognise a PABS domain in the interval 3-236 (ELWYTEKQTK…GLWTFTIGSK (234 aa)). Q32 contributes to the S-methyl-5'-thioadenosine binding site. Residues H63 and D87 each contribute to the spermidine site. Residues D107 and 138–139 (DG) contribute to the S-methyl-5'-thioadenosine site. Catalysis depends on D156, which acts as the Proton acceptor. 156-159 (DSTE) lines the spermidine pocket. P163 provides a ligand contact to S-methyl-5'-thioadenosine.

It belongs to the spermidine/spermine synthase family. Homodimer or homotetramer.

The protein resides in the cytoplasm. The enzyme catalyses S-adenosyl 3-(methylsulfanyl)propylamine + putrescine = S-methyl-5'-thioadenosine + spermidine + H(+). Its pathway is amine and polyamine biosynthesis; spermidine biosynthesis; spermidine from putrescine: step 1/1. In terms of biological role, involved in the cell growth and proliferation. Catalyzes the irreversible transfer of a propylamine group from the amino donor S-adenosylmethioninamine (decarboxy-AdoMet) to putrescine (1,4-diaminobutane) to yield spermidine. This chain is Polyamine aminopropyltransferase, found in Bacillus subtilis (strain 168).